Consider the following 281-residue polypeptide: Pantothenate synthetase (281 aa).

Position 30-37 (30-37 (MGNLHQGH)) interacts with ATP. His-37 functions as the Proton donor in the catalytic mechanism. Residue Gln-61 coordinates (R)-pantoate. Gln-61 serves as a coordination point for beta-alanine. 149–152 (GNKD) serves as a coordination point for ATP. A (R)-pantoate-binding site is contributed by Gln-155. ATP-binding positions include Ile-178 and 186–189 (MSSR).

Belongs to the pantothenate synthetase family. As to quaternary structure, homodimer.

It is found in the cytoplasm. It carries out the reaction (R)-pantoate + beta-alanine + ATP = (R)-pantothenate + AMP + diphosphate + H(+). It functions in the pathway cofactor biosynthesis; (R)-pantothenate biosynthesis; (R)-pantothenate from (R)-pantoate and beta-alanine: step 1/1. Its function is as follows. Catalyzes the condensation of pantoate with beta-alanine in an ATP-dependent reaction via a pantoyl-adenylate intermediate. The protein is Pantothenate synthetase of Shewanella baltica (strain OS155 / ATCC BAA-1091).